Reading from the N-terminus, the 637-residue chain is Probable potassium transport system protein Kup (637 aa).

12 consecutive transmembrane segments (helical) span residues 25-45 (ISLA…LYAI), 62-82 (VLGV…LKYL), 115-135 (WFLV…GMIT), 149-169 (IIAP…LTGL), 180-200 (VGAL…VLGL), 227-247 (LQGF…EALY), 263-283 (ILFV…LLLF), 295-315 (LVPS…TIIA), 352-372 (IYVP…VIGF), 378-398 (LAAA…ILFY), 410-430 (LATN…FGAS), and 434-454 (LFHG…LMLT).

This sequence belongs to the HAK/KUP transporter (TC 2.A.72) family.

Its subcellular location is the cell inner membrane. It catalyses the reaction K(+)(in) + H(+)(in) = K(+)(out) + H(+)(out). In terms of biological role, transport of potassium into the cell. Likely operates as a K(+):H(+) symporter. This Chlorobium phaeobacteroides (strain DSM 266 / SMG 266 / 2430) protein is Probable potassium transport system protein Kup.